The following is a 232-amino-acid chain: 2,3-bisphosphoglycerate-dependent phosphoglycerate mutase (232 aa).

Residues 8 to 15 (RHGESLWN), 21 to 22 (TG), arginine 60, 87 to 90 (ERHY), lysine 98, 114 to 115 (RR), and 183 to 184 (GN) contribute to the substrate site. Histidine 9 functions as the Tele-phosphohistidine intermediate in the catalytic mechanism. The Proton donor/acceptor role is filled by glutamate 87.

Belongs to the phosphoglycerate mutase family. BPG-dependent PGAM subfamily.

It carries out the reaction (2R)-2-phosphoglycerate = (2R)-3-phosphoglycerate. The protein operates within carbohydrate degradation; glycolysis; pyruvate from D-glyceraldehyde 3-phosphate: step 3/5. Its function is as follows. Catalyzes the interconversion of 2-phosphoglycerate and 3-phosphoglycerate. The protein is 2,3-bisphosphoglycerate-dependent phosphoglycerate mutase of Clostridium beijerinckii (strain ATCC 51743 / NCIMB 8052) (Clostridium acetobutylicum).